The following is a 467-amino-acid chain: Retinoic acid receptor RXR-alpha (467 aa).

A disordered region spans residues 1-112 (MDTKHFLPLD…MNPVSSTEDI (112 aa)). The segment at 1-139 (MDTKHFLPLD…GNMASFTKHI (139 aa)) is modulating domain. Residue Lys4 forms a Glycyl lysine isopeptide (Lys-Gly) (interchain with G-Cter in SUMO2) linkage. Residues 11-25 (FSTQVNSSSLNSPTG) show a composition bias toward polar residues. Phosphoserine occurs at positions 22 and 28. A compositionally biased stretch (low complexity) spans 32-52 (PSLHPSLGPGIGSPLGSPGQL). Residues 54–63 (SPISTLSSPI) show a composition bias toward polar residues. Ser61 and Ser75 each carry phosphoserine; by MAPK8 and MAPK9. The span at 83–109 (SVPTTPTLGFGTGSPQLNSPMNPVSST) shows a compositional bias: polar residues. Thr87 bears the Phosphothreonine; by MAPK8 and MAPK9 mark. A Glycyl lysine isopeptide (Lys-Gly) (interchain with G-Cter in SUMO) cross-link involves residue Lys113. A Phosphoserine modification is found at Ser134. 2 residues coordinate Zn(2+): Cys140 and Cys143. Residues 140 to 160 (CAICGDRSSGKHYGVYSCEGC) form an NR C4-type zinc finger. Positions 140-205 (CAICGDRSSG…RYQKCLAMGM (66 aa)) form a DNA-binding region, nuclear receptor. Lys150 carries the N6-acetyllysine modification. Positions 157 and 160 each coordinate Zn(2+). The tract at residues 165–170 (KRTVRK) is nuclear localization signal. The Zn(2+) site is built by Cys176, Cys182, Cys192, and Cys195. An NR C4-type zinc finger spans residues 176 to 200 (CRDNKDCLIDKRQRNRCQYCRYQKC). Positions 206–229 (KREAVQEERQRGKDRNENEVESTS) are hinge. Residues 211–223 (QEERQRGKDRNEN) are compositionally biased toward basic and acidic residues. The disordered stretch occupies residues 211–233 (QEERQRGKDRNENEVESTSSANE). The NR LBD domain maps to 232–463 (NEDMPVEKIL…TFLMEMLEAP (232 aa)). At Ser264 the chain carries Phosphoserine. Position 265 is a phosphoserine; by MAPK8 and MAPK9 (Ser265). 9-cis-retinoate-binding residues include Arg321 and Ala332. All-trans-retinoate is bound by residues Arg321 and Ala332. Residues 353 to 373 (RVLTELVSKMRDMQMDKTELG) form a required for nuclear export region.

The protein belongs to the nuclear hormone receptor family. NR2 subfamily. Homodimer. Heterodimer with RARA; required for ligand-dependent retinoic acid receptor transcriptional activity. Heterodimer with PPARA (via the leucine-like zipper in the LBD); the interaction is required for PPARA transcriptional activity. Heterodimerizes with PPARG. Heterodimerizes (via NR LBD) with RARB. Heterodimerizes with NR1H4; the heterodimerization enhances the binding affinity for LXXLL motifs from coactivators. Interacts with coactivator NCO6. Interacts with coactivator NCO3. Interacts with coactivator FAM120B. Interacts with coactivator PELP1, SENP6, SFPQ, DNTTIP2 and RNF8. Interacts with PRMT2. Interacts with ASXL1. Interacts with BHLHE40/DEC1, BHLHE41/DEC2, NCOR1 and NCOR2. Interacts in a ligand-dependent fashion with MED1 and NCOA1. Interacts with VDR. Interacts with EP300; the interaction is decreased by 9-cis retinoic acid. Heterodimer (via C-terminus) with NR4A1 (via DNA-binding domain); the interaction is enhanced by 9-cis retinoic acid. NR4A1 competes with EP300 for interaction with RXRA and thereby attenuates EP300 mediated acetylation of RXRA. In the absence of hormonal ligand, interacts with TACC1. Interacts ith IGFBP3. In terms of processing, acetylated by EP300; acetylation enhances DNA binding and transcriptional activity. Post-translationally, phosphorylated on serine and threonine residues mainly in the N-terminal modulating domain. Constitutively phosphorylated on Ser-22 in the presence or absence of ligand. Under stress conditions, hyperphosphorylated by activated JNK on Ser-61, Ser-75, Thr-87 and Ser-265. Phosphorylated on Ser-28, in vitro, by PKA. This phosphorylation is required for repression of cAMP-mediated transcriptional activity of RARA. Ubiquitinated by UBR5, leading to its degradation: UBR5 specifically recognizes and binds ligand-bound RXRA when it is not associated with coactivators (NCOAs). In presence of NCOAs, the UBR5-degron is not accessible, preventing its ubiquitination and degradation. In terms of processing, sumoylation negatively regulates transcriptional activity. Desumoylated specifically by SENP6. As to expression, expressed in macrophages (at protein level).

The protein localises to the nucleus. It is found in the cytoplasm. It localises to the mitochondrion. Its function is as follows. Receptor for retinoic acid that acts as a transcription factor. Forms homo- or heterodimers with retinoic acid receptors (RARs) and binds to target response elements in response to their ligands, all-trans or 9-cis retinoic acid, to regulate gene expression in various biological processes. The RAR/RXR heterodimers bind to the retinoic acid response elements (RARE) composed of tandem 5'-AGGTCA-3' sites known as DR1-DR5 to regulate transcription. The high affinity ligand for retinoid X receptors (RXRs) is 9-cis retinoic acid. In the absence of ligand, the RXR-RAR heterodimers associate with a multiprotein complex containing transcription corepressors that induce histone deacetylation, chromatin condensation and transcriptional suppression. On ligand binding, the corepressors dissociate from the receptors and coactivators are recruited leading to transcriptional activation. Serves as a common heterodimeric partner for a number of nuclear receptors, such as RARA, RARB and PPARA. The RXRA/RARB heterodimer can act as a transcriptional repressor or transcriptional activator, depending on the RARE DNA element context. The RXRA/PPARA heterodimer is required for PPARA transcriptional activity on fatty acid oxidation genes such as ACOX1 and the P450 system genes. Together with RARA, positively regulates microRNA-10a expression, thereby inhibiting the GATA6/VCAM1 signaling response to pulsatile shear stress in vascular endothelial cells. Acts as an enhancer of RARA binding to RARE DNA element. May facilitate the nuclear import of heterodimerization partners such as VDR and NR4A1. Promotes myelin debris phagocytosis and remyelination by macrophages. Plays a role in the attenuation of the innate immune system in response to viral infections, possibly by negatively regulating the transcription of antiviral genes such as type I IFN genes. Involved in the regulation of calcium signaling by repressing ITPR2 gene expression, thereby controlling cellular senescence. This is Retinoic acid receptor RXR-alpha (Rxra) from Mus musculus (Mouse).